We begin with the raw amino-acid sequence, 507 residues long: Polygalacturonase (507 aa).

A signal peptide spans 1 to 20 (MSMKFMAALAFLALQLIVMA). A propeptide spanning residues 21–54 (AGEDQSAQIMLDSDTKQYHRSSRNLRKRVHHARH) is cleaved from the precursor. PbH1 repeat units follow at residues 215-241 (CDGV…DIFA), 242-263 (SKRF…AVGT), 265-285 (SSNI…SIGS), 295-316 (VSFV…RIKT), 324-345 (ASHI…LINQ), and 358-385 (RSAV…QLMC). Residue Asp256 is the Proton donor of the active site. Asn267 is a glycosylation site (N-linked (GlcNAc...) asparagine). Residue His279 is part of the active site.

The protein belongs to the glycosyl hydrolase 28 family.

The protein resides in the secreted. Its subcellular location is the cell wall. It carries out the reaction (1,4-alpha-D-galacturonosyl)n+m + H2O = (1,4-alpha-D-galacturonosyl)n + (1,4-alpha-D-galacturonosyl)m.. The protein is Polygalacturonase (JNA2) of Juniperus ashei (Ozark white cedar).